The following is a 186-amino-acid chain: Ribosome-recycling factor (186 aa).

This sequence belongs to the RRF family.

It localises to the cytoplasm. Responsible for the release of ribosomes from messenger RNA at the termination of protein biosynthesis. May increase the efficiency of translation by recycling ribosomes from one round of translation to another. The sequence is that of Ribosome-recycling factor from Methylocella silvestris (strain DSM 15510 / CIP 108128 / LMG 27833 / NCIMB 13906 / BL2).